The sequence spans 431 residues: Protein translocase subunit SecY (431 aa).

The Cytoplasmic portion of the chain corresponds to 1-17; sequence MFKTISNFMRVSDIRNK. The chain crosses the membrane as a helical span at residues 18–38; sequence IIFTLLMLIVFRIGAFIPVPY. The Extracellular portion of the chain corresponds to 39–66; sequence VNAEALQAQSQMGVFDLLNTFGGGALYQ. Residues 67–87 form a helical membrane-spanning segment; that stretch reads FSIFAMGITPYITASIIIQLL. Over 88–115 the chain is Cytoplasmic; sequence QMDVVPKFTEWSKQGEVGRRKLAQFTRY. The chain crosses the membrane as a helical span at residues 116–136; the sequence is FTIVLGFIQALGMSYGFNNLA. Over 137–145 the chain is Extracellular; it reads NGMLIEKSG. Residues 146-166 form a helical membrane-spanning segment; it reads VSTYLIIALVLTGGTAFLMWL. Topologically, residues 167–177 are cytoplasmic; that stretch reads GEQITSHGVGN. Residues 178-198 traverse the membrane as a helical segment; it reads GISIIIFAGIVSSIPKTIGQI. Residues 199–213 are Extracellular-facing; that stretch reads YETQFVGSNDQLFIH. A helical membrane pass occupies residues 214–234; it reads IVKVALLVIAILAVIVGVIFI. At 235–261 the chain is on the cytoplasmic side; sequence QQAVRKIAIQYAKGTGRSPAGGGQSTH. The helical transmembrane segment at 262 to 282 threads the bilayer; that stretch reads LPLKVNPAGVIPVIFAVAFLI. Residues 283–308 lie on the Extracellular side of the membrane; it reads TPRTIASFFGTNDVTKWIQNNFDNTH. Residues 309-329 form a helical membrane-spanning segment; it reads PVGMAIYVALIIAFTYFYAFV. Over 330-368 the chain is Cytoplasmic; the sequence is QVNPEQMADNLKKQGGYIPGVRPGKMTQDRITSILYRLT. 2 consecutive transmembrane segments (helical) span residues 369 to 389 and 390 to 410; these read FVGS…IQFA and GLPQ…GVAL. Residues 411–431 lie on the Cytoplasmic side of the membrane; it reads ETMKQLESQLVKRNYRGFMKN.

This sequence belongs to the SecY/SEC61-alpha family. As to quaternary structure, component of the Sec protein translocase complex. Heterotrimer consisting of SecY, SecE and SecG subunits. The heterotrimers can form oligomers, although 1 heterotrimer is thought to be able to translocate proteins. Interacts with the ribosome. Interacts with SecDF, and other proteins may be involved. Interacts with SecA. Interacts with FloT.

The protein resides in the cell membrane. It localises to the membrane raft. Its function is as follows. The central subunit of the protein translocation channel SecYEG. Consists of two halves formed by TMs 1-5 and 6-10. These two domains form a lateral gate at the front which open onto the bilayer between TMs 2 and 7, and are clamped together by SecE at the back. The channel is closed by both a pore ring composed of hydrophobic SecY resides and a short helix (helix 2A) on the extracellular side of the membrane which forms a plug. The plug probably moves laterally to allow the channel to open. The ring and the pore may move independently. The chain is Protein translocase subunit SecY from Bacillus subtilis (strain 168).